The following is a 182-amino-acid chain: Histone deacetylase complex subunit SAP30L (182 aa).

Residue methionine 1 is modified to N-acetylmethionine. Residues 1–10 are compositionally biased toward acidic residues; the sequence is MNGFSTEEDS. Residues 1 to 22 are disordered; that stretch reads MNGFSTEEDSREGPPAAPAAAP. Disulfide bonds link cysteine 28/cysteine 29 and cysteine 37/cysteine 73. The Atypical zinc-finger motif lies at 28–76; that stretch reads CCLIADGERCVRPAGNASFSKRVQKSISQKKLKLDIDKSVRHLYICDFH. Lysine 48 is covalently cross-linked (Glycyl lysine isopeptide (Lys-Gly) (interchain with G-Cter in SUMO2)). Residues 84–103 are disordered; that stretch reads RNKRKRKASDDGGDSPEHDA. The short motif at 85–90 is the Nuclear localization signal (NLS) element; sequence NKRKRK. An important for DNA and phosphoinositide binding region spans residues 87–89; that stretch reads RKR. Phosphoserine is present on residues serine 92 and serine 98. Residues lysine 154, lysine 165, and lysine 174 each participate in a glycyl lysine isopeptide (Lys-Gly) (interchain with G-Cter in SUMO2) cross-link.

Belongs to the SAP30 family. As to quaternary structure, interacts with components of the histone deacetylase complex SIN3A, HDAC1 and HDAC2. Binds histones and nucleosomes. Interacts with FEZ1.

The protein localises to the nucleus. It localises to the nucleolus. Functionally, functions as a transcription repressor, probably via its interaction with histone deacetylase complexes. Involved in the functional recruitment of the class 1 Sin3-histone deacetylase complex (HDAC) to the nucleolus. Binds DNA, apparently without sequence-specificity, and bends bound double-stranded DNA. Binds phosphoinositol phosphates (phosphoinositol 3-phosphate, phosphoinositol 4-phosphate and phosphoinositol 5-phosphate) via the same basic sequence motif that mediates DNA binding and nuclear import. In Mus musculus (Mouse), this protein is Histone deacetylase complex subunit SAP30L (Sap30l).